Here is a 234-residue protein sequence, read N- to C-terminus: t-SNARE protein aex-4 (234 aa).

T-SNARE coiled-coil homology domains lie at alanine 37–methionine 99 and aspartate 170–leucine 232.

It belongs to the SNAP-25 family. In terms of tissue distribution, expressed in intestinal cells.

The protein resides in the cell membrane. T-SNARE protein which regulates the secretion of aex-5 from intestinal cells. Involved in the defecation motor program, which is a coordinated series of three muscle contractions that occurs every 45 seconds. The sequence is that of t-SNARE protein aex-4 from Caenorhabditis elegans.